Reading from the N-terminus, the 940-residue chain is Isoleucine--tRNA ligase (940 aa).

Residues 58–68 carry the 'HIGH' region motif; that stretch reads PYANGSIHIGH. E564 lines the L-isoleucyl-5'-AMP pocket. A 'KMSKS' region motif is present at residues 605 to 609; the sequence is KMSKS. K608 serves as a coordination point for ATP. Zn(2+) is bound by residues C903, C906, C923, and C926.

Belongs to the class-I aminoacyl-tRNA synthetase family. IleS type 1 subfamily. In terms of assembly, monomer. Requires Zn(2+) as cofactor.

It localises to the cytoplasm. It carries out the reaction tRNA(Ile) + L-isoleucine + ATP = L-isoleucyl-tRNA(Ile) + AMP + diphosphate. Its function is as follows. Catalyzes the attachment of isoleucine to tRNA(Ile). As IleRS can inadvertently accommodate and process structurally similar amino acids such as valine, to avoid such errors it has two additional distinct tRNA(Ile)-dependent editing activities. One activity is designated as 'pretransfer' editing and involves the hydrolysis of activated Val-AMP. The other activity is designated 'posttransfer' editing and involves deacylation of mischarged Val-tRNA(Ile). The polypeptide is Isoleucine--tRNA ligase (Shewanella baltica (strain OS195)).